Consider the following 355-residue polypeptide: N-acetyl-gamma-glutamyl-phosphate reductase (355 aa).

Cysteine 152 is an active-site residue.

Belongs to the NAGSA dehydrogenase family. Type 1 subfamily.

Its subcellular location is the cytoplasm. The catalysed reaction is N-acetyl-L-glutamate 5-semialdehyde + phosphate + NADP(+) = N-acetyl-L-glutamyl 5-phosphate + NADPH + H(+). It participates in amino-acid biosynthesis; L-arginine biosynthesis; N(2)-acetyl-L-ornithine from L-glutamate: step 3/4. Functionally, catalyzes the NADPH-dependent reduction of N-acetyl-5-glutamyl phosphate to yield N-acetyl-L-glutamate 5-semialdehyde. This Psychrobacter arcticus (strain DSM 17307 / VKM B-2377 / 273-4) protein is N-acetyl-gamma-glutamyl-phosphate reductase.